Here is a 238-residue protein sequence, read N- to C-terminus: ATP synthase subunit a (238 aa).

Transmembrane regions (helical) follow at residues 17 to 37 (LSNILMITVTCVIVLLIAIIC), 80 to 100 (ITLLMFIFVANMLGLPFQIAI), 112 to 132 (DPIVTLTLAIMVLGLTHYYGI), and 194 to 214 (IFVGVLAIIPALLWQGFSIFI).

This sequence belongs to the ATPase A chain family. F-type ATPases have 2 components, CF(1) - the catalytic core - and CF(0) - the membrane proton channel. CF(1) has five subunits: alpha(3), beta(3), gamma(1), delta(1), epsilon(1). CF(0) has three main subunits: a(1), b(2) and c(9-12). The alpha and beta chains form an alternating ring which encloses part of the gamma chain. CF(1) is attached to CF(0) by a central stalk formed by the gamma and epsilon chains, while a peripheral stalk is formed by the delta and b chains.

The protein resides in the cell membrane. Its function is as follows. Key component of the proton channel; it plays a direct role in the translocation of protons across the membrane. The chain is ATP synthase subunit a from Listeria welshimeri serovar 6b (strain ATCC 35897 / DSM 20650 / CCUG 15529 / CIP 8149 / NCTC 11857 / SLCC 5334 / V8).